The sequence spans 348 residues: MQTPSMAASTTSYYPIPKSFLLSPPRHKRNPNLISCSTKPICSPPPPSSSSSSPLQTTTTHRSQKQNLRLPTFEDSFLLYQFSSPTEDPGFSNRIPEQFDGEPRELVLPRVEDNNKGLAISSNMWWADLKAALGQRINIEGIVSSVSVVVKDRQFVLPHVSVKDLRYIDWEVLKRKGFKGVVFDKDNTLTAPYSLAIWPPLRPSIERCKAVFGHDIAVFSNSAGLTEYDHDDSKAKALEAEIGIRVLRHRVKKPAGTAEEVEKHFGCTSSELIMVGDRPFTDIVYGNRNGFLTVLTEPLSRAEEPFIVRQVRRLELALLKRWLRKGLKPVDHSLVSDITQFVKVPSDL.

Residues 1 to 58 constitute a chloroplast and mitochondrion transit peptide; the sequence is MQTPSMAASTTSYYPIPKSFLLSPPRHKRNPNLISCSTKPICSPPPPSSSSSSPLQTT. The interval 17–67 is disordered; the sequence is PKSFLLSPPRHKRNPNLISCSTKPICSPPPPSSSSSSPLQTTTTHRSQKQN. Over residues 55–67 the composition is skewed to polar residues; it reads LQTTTTHRSQKQN. The Phosphoryl acceptor motif lies at 184 to 188; it reads DKDNT.

It belongs to the HAD-like hydrolase superfamily. Requires Mg(2+) as cofactor. Mainly expressed in inflorescences (especially in pollen) and, to a lower extent, in leaves, stems and siliques, as well as, at low levels, in roots. Mostly expressed in hypocotyl, vasculatures, trichomes, guard cells and stigmas.

The protein localises to the plastid. Its subcellular location is the chloroplast. It localises to the mitochondrion. The enzyme catalyses a 1,2-diacyl-sn-glycero-3-phospho-(1'-sn-glycero-3'-phosphate) + H2O = a 1,2-diacyl-sn-glycero-3-phospho-(1'-sn-glycerol) + phosphate. It participates in phospholipid metabolism; phosphatidylglycerol biosynthesis; phosphatidylglycerol from CDP-diacylglycerol: step 2/2. Functionally, phosphatidylglycerophosphate (PGP) phosphatase involved in the biosynthesis of phosphatidylglycerol (PG), a phosphoglycerolipid predominantly present in chloroplastic thylakoid membranes and which has important photosynthetic function; seems to use PGP 34:3, PGP 34:2 and PGP 34:1 as substrates. Required for thylakoid membranes development and chloroplast function. Necessary for normal cell growth. Required for root growth and columella cells organization. This Arabidopsis thaliana (Mouse-ear cress) protein is Phosphatidylglycerophosphate phosphatase 1, chloroplastic/mitochondrial.